We begin with the raw amino-acid sequence, 35 residues long: U5-ctenitoxin-Co1a (35 aa).

4 disulfide bridges follow: C4-C18, C11-C24, C17-C32, and C26-C30.

As to expression, expressed by the venom gland.

It is found in the secreted. In terms of biological role, blocks voltage-gated sodium channels (Nav). This is U5-ctenitoxin-Co1a from Ctenus ornatus (Brazilian spider).